A 3646-amino-acid chain; its full sequence is Platelet adherence protein A (3646 aa).

The first 33 residues, 1-33 (MKDFLKKVLILFTVLLMSMPSSVLNLGTSVVRA), serve as a signal peptide directing secretion. The segment at 34–359 (DDPLNIETRR…KNVSFYVNEQ (326 aa)) is does not bind platelets. Residues 34-690 (DDPLNIETRR…NQDAHAKTKD (657 aa)) are F2, binds platelets, fibronectin, vitronectin, salivary pellicle, causes ADP secretion by dense granules. A binds platelets region spans residues 34 to 1328 (DDPLNIETRR…KFVLSDTLEE (1295 aa)). Residues 75–373 (DLVILQDASG…VFSQKILESV (299 aa)) enclose the VWFA domain. The Integrin-like recognition motif NGR motif lies at 214 to 216 (NGR). Residues 416-418 (RGT) carry the Integrin-like recognition motif RGT motif. A disordered region spans residues 439–466 (KNSFDYDLSKEARAPETDEDSEVDPPEN). Over residues 445–454 (DLSKEARAPE) the composition is skewed to basic and acidic residues. Residues 485–487 (AGD) carry the Integrin-like recognition motif AGD motif. The interval 709–3205 (TEVDKKVNEK…TVPNKATIAF (2497 aa)) is central region with RrgB repeats. 2 stretches are compositionally biased toward basic and acidic residues: residues 1124 to 1135 (KDKNDHKGEKET) and 1563 to 1573 (DHNPKFHKDSN). Disordered regions lie at residues 1124-1153 (KDKN…KKIN), 1563-1589 (DHNP…PIEK), 2011-2036 (FNND…EPEL), 2170-2198 (EKDS…KPSA), 2320-2343 (KTEK…IKKE), 2467-2492 (PNRP…PEIK), 2611-2644 (ASYR…PIEK), 2767-2792 (FNND…EPEL), 2916-2948 (PNKP…NSKP), 3202-3252 (TIAF…NPST), 3371-3412 (AAAK…AALE), and 3550-3618 (NDKP…PKTG). The segment covering 2011 to 2022 (FNNDPGTEQSSK) has biased composition (polar residues). The segment covering 2767 to 2778 (FNNDPGTEQSSK) has biased composition (polar residues). Positions 3210–3220 (GKNGTKESNPV) are enriched in polar residues. Positions 3223–3237 (RPRDPEKPEEPKPNE) are enriched in basic and acidic residues. Coiled coils occupy residues 3326–3376 (IAKI…AKEK) and 3408–3475 (VAAL…VNDK). Over residues 3371–3406 (AAAKEKAAAAPATPAPASDSDAGNATATPAPADNNA) the composition is skewed to low complexity. Polar residues predominate over residues 3550–3560 (NDKPKVTNTVN). The span at 3563–3605 (PPEPTTPPQTPPHTPPTTPGTPPPTTPDTPPAPKGDLPPAPTP) shows a compositional bias: pro residues. The LPXTG sorting signal signature appears at 3614-3618 (LPKTG). T3617 is modified (pentaglycyl murein peptidoglycan amidated threonine). Residues 3618-3646 (GTSATMVNEVIIGMILVLMGLLLRRKPKH) constitute a propeptide, removed by sortase.

Its subcellular location is the secreted. It is found in the cell wall. Whole bacterial adhesion to Chinese hamster ovary cells expressing GPIIbIIIa is abrogated by integrin inhibitor RGDS and GPIIbIIIa inhibitor Abciximab. Functionally, a cell wall protein involved with Hsa in host cell interactions required for colonization and pathogenesis. Involved in recognition of platelets. Interacts with human platelet integrin receptor GPIIbIIIa (a complex of ITGA2B and ITGB3). Involved in platelet spreading, presumably by activation of outside-in signaling leading to platelet activation and then spreading. Spreading also involves GPIIbIIIa. Binding to platelets under static conditions causes platelet dense granules to secrete ADP (similar to release induced by fibrinogen binding), has no effect on platelet alpha granule release. The N-terminal 656 aa residue fragment (called F2) also binds platelets, causes dense granule secretion and allows platelet spreading. Acts in concert with Hsa to promote binding to human fibronectin (FN1) and vitronectin (VTN), and biofilm formation. F2 bind activated platelets more strongly than unactivated platelets. Binding to both FN1 and VTN is mediated at least in part by their glycosylation. The chain is Platelet adherence protein A from Streptococcus gordonii (strain Challis / ATCC 35105 / BCRC 15272 / CH1 / DL1 / V288).